Here is a 193-residue protein sequence, read N- to C-terminus: Probable gluconokinase (193 aa).

Position 18–25 (18–25) interacts with ATP; sequence GTAGTGKS.

Belongs to the gluconokinase GntK/GntV family.

It is found in the cytoplasm. The enzyme catalyses D-gluconate + ATP = 6-phospho-D-gluconate + ADP + H(+). It participates in carbohydrate acid metabolism; D-gluconate degradation. This Saccharomyces cerevisiae (strain ATCC 204508 / S288c) (Baker's yeast) protein is Probable gluconokinase.